The sequence spans 243 residues: Lipid II isoglutaminyl synthase (glutamine-hydrolyzing) subunit GatD (243 aa).

In terms of domain architecture, GATase cobBQ-type spans 6–197 (IYHFMSDKLN…LHGPILPKNY (192 aa)). The active-site Nucleophile is the Cys94. Arg128 lines the substrate pocket. The active site involves His189.

This sequence belongs to the CobB/CobQ family. GatD subfamily. In terms of assembly, forms a heterodimer with MurT.

The catalysed reaction is beta-D-GlcNAc-(1-&gt;4)-Mur2Ac(oyl-L-Ala-gamma-D-Glu-L-Lys-D-Ala-D-Ala)-di-trans,octa-cis-undecaprenyl diphosphate + L-glutamine + ATP + H2O = beta-D-GlcNAc-(1-&gt;4)-Mur2Ac(oyl-L-Ala-D-isoglutaminyl-L-Lys-D-Ala-D-Ala)-di-trans,octa-cis-undecaprenyl diphosphate + L-glutamate + ADP + phosphate + H(+). It carries out the reaction L-glutamine + H2O = L-glutamate + NH4(+). It participates in cell wall biogenesis; peptidoglycan biosynthesis. The lipid II isoglutaminyl synthase complex catalyzes the formation of alpha-D-isoglutamine in the cell wall lipid II stem peptide. The GatD subunit catalyzes the hydrolysis of glutamine to glutamate and ammonia. The resulting ammonia molecule is channeled to the active site of MurT. The polypeptide is Lipid II isoglutaminyl synthase (glutamine-hydrolyzing) subunit GatD (Staphylococcus aureus (strain N315)).